We begin with the raw amino-acid sequence, 399 residues long: Protein HYM1 (399 aa).

Over residues 363–382 (VSNNNASSSNVASITSPSSV) the composition is skewed to low complexity. The segment at 363–399 (VSNNNASSSNVASITSPSSVMNNQSSILTHSTSPDSR) is disordered. Residues 383 to 399 (MNNQSSILTHSTSPDSR) show a composition bias toward polar residues.

It belongs to the Mo25 family.

The sequence is that of Protein HYM1 (HYM1) from Saccharomyces cerevisiae (strain ATCC 204508 / S288c) (Baker's yeast).